The chain runs to 100 residues: Small ribosomal subunit protein uS14c (100 aa).

This sequence belongs to the universal ribosomal protein uS14 family. Part of the 30S ribosomal subunit.

The protein localises to the plastid. The protein resides in the chloroplast. Binds 16S rRNA, required for the assembly of 30S particles. This chain is Small ribosomal subunit protein uS14c, found in Chloranthus spicatus (Chulantree).